Consider the following 402-residue polypeptide: Acetate kinase (402 aa).

N10 provides a ligand contact to Mg(2+). K17 is an ATP binding site. Position 89 (R89) interacts with substrate. D148 functions as the Proton donor/acceptor in the catalytic mechanism. Residues 208-212, 283-285, and 334-338 each bind ATP; these read HLGNG, DCR, and GIGEN. Position 389 (E389) interacts with Mg(2+).

The protein belongs to the acetokinase family. In terms of assembly, homodimer. Mg(2+) serves as cofactor. Requires Mn(2+) as cofactor.

It localises to the cytoplasm. It catalyses the reaction acetate + ATP = acetyl phosphate + ADP. It participates in metabolic intermediate biosynthesis; acetyl-CoA biosynthesis; acetyl-CoA from acetate: step 1/2. In terms of biological role, catalyzes the formation of acetyl phosphate from acetate and ATP. Can also catalyze the reverse reaction. In Actinobacillus pleuropneumoniae serotype 5b (strain L20), this protein is Acetate kinase.